The chain runs to 226 residues: Protein AhpA (226 aa).

Helical transmembrane passes span 12-32 and 169-189; these read SMIS…LFGV and GELI…HYFL.

This sequence belongs to the Smp family.

It is found in the cell inner membrane. Functionally, when anaerobically expressed in wild-type E.coli K12 confers a hemolytic phenotype, but not in an sheA mutant. Suggests it affects the expression of the latent E.coli K12 hemolysin sheA under anaerobic conditions. In Pasteurella multocida (strain Pm70), this protein is Protein AhpA (ahpA).